The primary structure comprises 617 residues: uncharacterized protein (617 aa).

A helical transmembrane segment spans residues 10–30; it reads AFFFFFVSLILLFLSPSYSDV. Positions 34 to 58 are disordered; that stretch reads ESDPIPYENSDASPGVVTSSESDRQ. The segment covering 43–53 has biased composition (polar residues); that stretch reads SDASPGVVTSS. Positions 60–86 form a coiled coil; the sequence is VSLHRLEELVRNLTELVARLDAKLSET. The helical transmembrane segment at 473-493 threads the bilayer; that stretch reads MLWSSPVFFFILFLFGAWHFF. Over residues 511 to 529 the composition is skewed to low complexity; that stretch reads STTMSSSSTTTAQNSSAFS. The interval 511–617 is disordered; it reads STTMSSSSTT…GNNKALDDES (107 aa). Over residues 531 to 543 the composition is skewed to basic and acidic residues; it reads STRRNDDHMDLRR. Polar residues predominate over residues 563–584; the sequence is VGSNDPSSRAPVETTNYRTTAQ. The span at 590–599 shows a compositional bias: gly residues; sequence GGSGLDSGGF.

The protein resides in the membrane. This is an uncharacterized protein from Arabidopsis thaliana (Mouse-ear cress).